The chain runs to 164 residues: NADH-quinone oxidoreductase subunit C (164 aa).

It belongs to the complex I 30 kDa subunit family. In terms of assembly, NDH-1 is composed of 14 different subunits. Subunits NuoB, C, D, E, F, and G constitute the peripheral sector of the complex.

It is found in the cell inner membrane. The catalysed reaction is a quinone + NADH + 5 H(+)(in) = a quinol + NAD(+) + 4 H(+)(out). NDH-1 shuttles electrons from NADH, via FMN and iron-sulfur (Fe-S) centers, to quinones in the respiratory chain. The immediate electron acceptor for the enzyme in this species is believed to be ubiquinone. Couples the redox reaction to proton translocation (for every two electrons transferred, four hydrogen ions are translocated across the cytoplasmic membrane), and thus conserves the redox energy in a proton gradient. This chain is NADH-quinone oxidoreductase subunit C, found in Geotalea uraniireducens (strain Rf4) (Geobacter uraniireducens).